We begin with the raw amino-acid sequence, 458 residues long: Probable Xaa-Pro aminopeptidase pepP (458 aa).

Mn(2+) contacts are provided by aspartate 254, aspartate 265, glutamate 388, and glutamate 428.

The protein belongs to the peptidase M24B family. Requires Mn(2+) as cofactor.

The catalysed reaction is Release of any N-terminal amino acid, including proline, that is linked to proline, even from a dipeptide or tripeptide.. Its function is as follows. Catalyzes the removal of a penultimate prolyl residue from the N-termini of peptides. The protein is Probable Xaa-Pro aminopeptidase pepP (pepP) of Botryotinia fuckeliana (strain B05.10) (Noble rot fungus).